Consider the following 292-residue polypeptide: ATP synthase gamma chain (292 aa).

It belongs to the ATPase gamma chain family. F-type ATPases have 2 components, CF(1) - the catalytic core - and CF(0) - the membrane proton channel. CF(1) has five subunits: alpha(3), beta(3), gamma(1), delta(1), epsilon(1). CF(0) has three main subunits: a, b and c.

The protein resides in the cell inner membrane. In terms of biological role, produces ATP from ADP in the presence of a proton gradient across the membrane. The gamma chain is believed to be important in regulating ATPase activity and the flow of protons through the CF(0) complex. The chain is ATP synthase gamma chain from Brucella anthropi (strain ATCC 49188 / DSM 6882 / CCUG 24695 / JCM 21032 / LMG 3331 / NBRC 15819 / NCTC 12168 / Alc 37) (Ochrobactrum anthropi).